We begin with the raw amino-acid sequence, 308 residues long: D-alanine--D-alanine ligase (308 aa).

Positions 100 to 295 constitute an ATP-grasp domain; the sequence is KEVFVRNGLP…FDGLIGRLIE (196 aa). 127–180 lines the ATP pocket; it reads PFAFPAFIKSNNGGSSLALHRVSCPGELARALDELFTRGGEAIIEPAVEGVEVT. Mg(2+) contacts are provided by Asp-249, Glu-262, and Asn-264.

Belongs to the D-alanine--D-alanine ligase family. The cofactor is Mg(2+). Mn(2+) serves as cofactor.

The protein resides in the cytoplasm. It carries out the reaction 2 D-alanine + ATP = D-alanyl-D-alanine + ADP + phosphate + H(+). The protein operates within cell wall biogenesis; peptidoglycan biosynthesis. Its function is as follows. Cell wall formation. This is D-alanine--D-alanine ligase from Oleidesulfovibrio alaskensis (strain ATCC BAA-1058 / DSM 17464 / G20) (Desulfovibrio alaskensis).